The chain runs to 157 residues: UPF0262 protein RHE_CH00582 (157 aa).

It belongs to the UPF0262 family.

The polypeptide is UPF0262 protein RHE_CH00582 (Rhizobium etli (strain ATCC 51251 / DSM 11541 / JCM 21823 / NBRC 15573 / CFN 42)).